The chain runs to 78 residues: MNSVGEECTDMKRDYDQCFNRWFAEKFLKGAGSGDPCTELFRRYRECVQKAIKDKDIPVDGVDFMGPSKSKTESDGSS.

Residues 1–52 are a coiled coil; it reads MNSVGEECTDMKRDYDQCFNRWFAEKFLKGAGSGDPCTELFRRYRECVQKAI. Residues 5–55 form the CHCH domain; the sequence is GEECTDMKRDYDQCFNRWFAEKFLKGAGSGDPCTELFRRYRECVQKAIKDK. Short sequence motifs (cx9C motif) lie at residues 8-18 and 37-47; these read CTDMKRDYDQC and CTELFRRYREC. 2 cysteine pairs are disulfide-bonded: Cys-8-Cys-47 and Cys-18-Cys-37.

This sequence belongs to the TRIAP1/MDM35 family. As to quaternary structure, monomer. Forms a complex with prelid1 in the mitochondrion intermembrane space. Interacts with prelid3a.

The protein resides in the mitochondrion. It localises to the mitochondrion intermembrane space. It carries out the reaction a 1,2-diacyl-sn-glycero-3-phosphate(in) = a 1,2-diacyl-sn-glycero-3-phosphate(out). In terms of biological role, involved in the modulation of the mitochondrial apoptotic pathway by ensuring the accumulation of cardiolipin (CL) in mitochondrial membranes. The triap1:prelid1 complex probably functions as a phosphatidic acid (PA) transporter across the mitochondrion intermembrane space to provide PA for cardiolipin CL synthesis in the inner membrane. Likewise, the triap1:prelid3a complex mediates the transfer of phosphatidic acid (PA) between liposomes (in vitro) and probably functions as a PA transporter across the mitochondrion intermembrane space (in vivo). Mediates cell survival by inhibiting activation of caspase-9 which prevents induction of apoptosis. Required for pronephros development; probably involved at an early stage in the formation of pronephric components derived from the somatic layer. In Xenopus laevis (African clawed frog), this protein is TP53-regulated inhibitor of apoptosis 1-A (triap1-a).